The chain runs to 646 residues: Ribonuclease Y (646 aa).

The chain crosses the membrane as a helical span at residues 4–24 (VLVVLLSLVLVVLSVLILAVA). 2 disordered regions span residues 43-62 (PRTP…DFDE) and 69-118 (LPAP…HGGS). In terms of domain architecture, KH spans 336–402 (VVTVLHLPGD…RITLAALVSD (67 aa)). The 94-residue stretch at 462-555 (VLAHLIESAH…TQAADQISGG (94 aa)) folds into the HD domain.

It belongs to the RNase Y family.

The protein localises to the cell membrane. Functionally, endoribonuclease that initiates mRNA decay. This chain is Ribonuclease Y, found in Frankia casuarinae (strain DSM 45818 / CECT 9043 / HFP020203 / CcI3).